An 858-amino-acid polypeptide reads, in one-letter code: Leucine--tRNA ligase (858 aa).

The 'HIGH' region signature appears at 42–52 (PYPSGRLHMGH). Residues 618 to 622 (KMSKS) carry the 'KMSKS' region motif. Lys-621 serves as a coordination point for ATP.

The protein belongs to the class-I aminoacyl-tRNA synthetase family.

It localises to the cytoplasm. The catalysed reaction is tRNA(Leu) + L-leucine + ATP = L-leucyl-tRNA(Leu) + AMP + diphosphate. This chain is Leucine--tRNA ligase, found in Aeromonas salmonicida (strain A449).